Reading from the N-terminus, the 71-residue chain is Large ribosomal subunit protein bL31 (71 aa).

Zn(2+)-binding residues include Cys-16, Cys-18, Cys-38, and Cys-41.

The protein belongs to the bacterial ribosomal protein bL31 family. Type A subfamily. As to quaternary structure, part of the 50S ribosomal subunit. It depends on Zn(2+) as a cofactor.

Functionally, binds the 23S rRNA. This is Large ribosomal subunit protein bL31 from Francisella tularensis subsp. mediasiatica (strain FSC147).